We begin with the raw amino-acid sequence, 235 residues long: Phosphoribosylaminoimidazole-succinocarboxamide synthase (235 aa).

It belongs to the SAICAR synthetase family.

The catalysed reaction is 5-amino-1-(5-phospho-D-ribosyl)imidazole-4-carboxylate + L-aspartate + ATP = (2S)-2-[5-amino-1-(5-phospho-beta-D-ribosyl)imidazole-4-carboxamido]succinate + ADP + phosphate + 2 H(+). The protein operates within purine metabolism; IMP biosynthesis via de novo pathway; 5-amino-1-(5-phospho-D-ribosyl)imidazole-4-carboxamide from 5-amino-1-(5-phospho-D-ribosyl)imidazole-4-carboxylate: step 1/2. The chain is Phosphoribosylaminoimidazole-succinocarboxamide synthase from Streptococcus pneumoniae (strain JJA).